A 111-amino-acid polypeptide reads, in one-letter code: uncharacterized protein (111 aa).

The protein resides in the cytoplasm. It localises to the nucleus. This is an uncharacterized protein from Schizosaccharomyces pombe (strain 972 / ATCC 24843) (Fission yeast).